The following is a 354-amino-acid chain: Ornithine carbamoyltransferase, catabolic (354 aa).

Carbamoyl phosphate is bound by residues 67–70 (STRT), glutamine 94, arginine 118, and 145–148 (HPTQ). Residues asparagine 177, aspartate 241, and 245 to 246 (SM) contribute to the L-ornithine site. Carbamoyl phosphate is bound by residues 284-285 (CL) and arginine 329.

This sequence belongs to the aspartate/ornithine carbamoyltransferase superfamily. OTCase family.

Its subcellular location is the cytoplasm. The catalysed reaction is carbamoyl phosphate + L-ornithine = L-citrulline + phosphate + H(+). The protein operates within amino-acid degradation; L-arginine degradation via ADI pathway; carbamoyl phosphate from L-arginine: step 2/2. Its function is as follows. Reversibly catalyzes the transfer of the carbamoyl group from carbamoyl phosphate (CP) to the N(epsilon) atom of ornithine (ORN) to produce L-citrulline. The chain is Ornithine carbamoyltransferase, catabolic (arcB) from Lactococcus lactis subsp. cremoris (Streptococcus cremoris).